The sequence spans 669 residues: UvrABC system protein B (669 aa).

The 389-residue stretch at 26 to 414 (TNFHAGIAKQ…AGEVIELLVR (389 aa)) folds into the Helicase ATP-binding domain. An ATP-binding site is contributed by 39–46 (GVTGSGKT). Positions 92 to 115 (YYDYYQPEAYVPASDTFIEKDSSI) match the Beta-hairpin motif. The 163-residue stretch at 435–597 (LISQINVCIK…SVVRPISDIL (163 aa)) folds into the Helicase C-terminal domain. The UVR domain maps to 631–666 (AAQMKVLEQQMYQHARDLEFEDAARIRDQIQRLREA).

It belongs to the UvrB family. In terms of assembly, forms a heterotetramer with UvrA during the search for lesions. Interacts with UvrC in an incision complex.

The protein resides in the cytoplasm. Functionally, the UvrABC repair system catalyzes the recognition and processing of DNA lesions. A damage recognition complex composed of 2 UvrA and 2 UvrB subunits scans DNA for abnormalities. Upon binding of the UvrA(2)B(2) complex to a putative damaged site, the DNA wraps around one UvrB monomer. DNA wrap is dependent on ATP binding by UvrB and probably causes local melting of the DNA helix, facilitating insertion of UvrB beta-hairpin between the DNA strands. Then UvrB probes one DNA strand for the presence of a lesion. If a lesion is found the UvrA subunits dissociate and the UvrB-DNA preincision complex is formed. This complex is subsequently bound by UvrC and the second UvrB is released. If no lesion is found, the DNA wraps around the other UvrB subunit that will check the other stand for damage. The chain is UvrABC system protein B from Xylella fastidiosa (strain 9a5c).